Reading from the N-terminus, the 464-residue chain is Nuclear distribution protein nudF 2 (464 aa).

Residues 9-41 form the LisH domain; it reads QAAELNKSIIAYLSAHGLAETLAAFRKESDFPD. The stretch at 63 to 88 forms a coiled coil; it reads NSTLMKKLLALESHNKALRNELNSTR. WD repeat units follow at residues 112 to 151, 154 to 195, 199 to 238, 241 to 280, 285 to 343, 344 to 383, 388 to 424, and 426 to 464; these read SHRD…LERT, GHTM…KNVK, GHDH…RVKT, DHTG…PICK, GHEN…MTLT, GHAS…RCVK, AHDG…AELP, and SKLD…RSHK.

This sequence belongs to the WD repeat LIS1/nudF family. As to quaternary structure, self-associates. Interacts with nudE and dynein.

The protein localises to the cytoplasm. The protein resides in the cytoskeleton. It is found in the spindle pole. Positively regulates the activity of the minus-end directed microtubule motor protein dynein. May enhance dynein-mediated microtubule sliding by targeting dynein to the microtubule plus end. Required for nuclear migration during vegetative growth as well as development. Required for retrograde early endosome (EE) transport from the hyphal tip. Required for localization of dynein to the mitotic spindle poles. Recruits additional proteins to the dynein complex at SPBs. This Penicillium rubens (strain ATCC 28089 / DSM 1075 / NRRL 1951 / Wisconsin 54-1255) (Penicillium chrysogenum) protein is Nuclear distribution protein nudF 2.